Reading from the N-terminus, the 207-residue chain is Large ribosomal subunit protein uL4 (207 aa).

Residues 62–85 are disordered; that stretch reads KKPFKQKGTGQARQGCRRAPQYPG.

It belongs to the universal ribosomal protein uL4 family. In terms of assembly, part of the 50S ribosomal subunit.

In terms of biological role, one of the primary rRNA binding proteins, this protein initially binds near the 5'-end of the 23S rRNA. It is important during the early stages of 50S assembly. It makes multiple contacts with different domains of the 23S rRNA in the assembled 50S subunit and ribosome. Its function is as follows. Forms part of the polypeptide exit tunnel. This is Large ribosomal subunit protein uL4 from Geobacter sp. (strain M21).